Reading from the N-terminus, the 118-residue chain is Large ribosomal subunit protein bL19 (118 aa).

The protein belongs to the bacterial ribosomal protein bL19 family.

Functionally, this protein is located at the 30S-50S ribosomal subunit interface and may play a role in the structure and function of the aminoacyl-tRNA binding site. In Campylobacter curvus (strain 525.92), this protein is Large ribosomal subunit protein bL19.